The following is a 301-amino-acid chain: Transcriptional activator protein NhaR (301 aa).

In terms of domain architecture, HTH lysR-type spans 6–63 (INYNHLYYFWHVYKEGSVVGAAEALYLTPQTITGQIRALEERLQGKLFKRKGRGLEPS). The H-T-H motif DNA-binding region spans 23–42 (VVGAAEALYLTPQTITGQIR).

It belongs to the LysR transcriptional regulatory family.

The protein resides in the cytoplasm. Functionally, plays a role in the positive regulation of NhaA. In Escherichia coli (strain K12), this protein is Transcriptional activator protein NhaR (nhaR).